Here is a 204-residue protein sequence, read N- to C-terminus: Secreted phosphoprotein 24 (204 aa).

The first 23 residues, 1-23 (MEKRAMRMLAMFVLGTSFWSCAG), serve as a signal peptide directing secretion. Intrachain disulfides connect C86–C97 and C110–C128. S90 bears the Phosphoserine mark. 4 positions are modified to phosphoserine: S138, S139, S166, and S175. The interval 179–204 (MRRFPPPGNRSFPNQWPRARTNTGFE) is disordered.

Belongs to the SPP2 family. In terms of processing, multiply phosphorylated at serine residues. Post-translationally, phosphorylation sites are present in the extracellular medium.

It is found in the secreted. In terms of biological role, could coordinate an aspect of bone turnover. This Sus scrofa (Pig) protein is Secreted phosphoprotein 24 (SPP2).